The sequence spans 1078 residues: Cell wall acid trehalase ATC1 (1078 aa).

Positions 1-54 (MAANSSFFLADNCAPHNQSFIQFCIHAASKKKGRIALMCLANLFLLFSFHLLYA) are cleaved as a signal peptide. 8 N-linked (GlcNAc...) asparagine glycosylation sites follow: Asn4, Asn17, Asn150, Asn184, Asn242, Asn287, Asn301, and Asn350. 478 to 479 (WD) provides a ligand contact to substrate. Asn532, Asn591, and Asn601 each carry an N-linked (GlcNAc...) asparagine glycan. Glu607 (proton donor) is an active-site residue. Asn661 and Asn670 each carry an N-linked (GlcNAc...) asparagine glycan. 676 to 677 (KQ) lines the substrate pocket. Asn829, Asn837, Asn904, Asn922, Asn931, Asn946, Asn1003, and Asn1037 each carry an N-linked (GlcNAc...) asparagine glycan.

Belongs to the glycosyl hydrolase 65 family.

It localises to the secreted. It is found in the cell wall. It catalyses the reaction alpha,alpha-trehalose + H2O = alpha-D-glucose + beta-D-glucose. Cell wall acid trehalase that catalyzes hydrolysis of the disaccharide trehalose and required for growth on trehalose as carbon source. Plays a role in dimorphic conversion and virulence. This is Cell wall acid trehalase ATC1 (ATC1) from Candida albicans (strain SC5314 / ATCC MYA-2876) (Yeast).